The sequence spans 873 residues: Protein translocase subunit SecA (873 aa).

Residues Gln85, 103–107, and Asp492 each bind ATP; that span reads GEGKT. The segment covering 835–856 has biased composition (basic and acidic residues); the sequence is RYAEEEGKQPIRKENQIGRNDD. The segment at 835 to 873 is disordered; that stretch reads RYAEEEGKQPIRKENQIGRNDDCPCGSGKKYKKCCGKNA. Positions 857, 859, 868, and 869 each coordinate Zn(2+). Basic residues predominate over residues 863 to 873; it reads KKYKKCCGKNA.

It belongs to the SecA family. As to quaternary structure, monomer and homodimer. Part of the essential Sec protein translocation apparatus which comprises SecA, SecYEG and auxiliary proteins SecDF. Other proteins may also be involved. Requires Zn(2+) as cofactor.

It localises to the cell membrane. Its subcellular location is the cytoplasm. It carries out the reaction ATP + H2O + cellular proteinSide 1 = ADP + phosphate + cellular proteinSide 2.. In terms of biological role, part of the Sec protein translocase complex. Interacts with the SecYEG preprotein conducting channel. Has a central role in coupling the hydrolysis of ATP to the transfer of proteins into and across the cell membrane, serving as an ATP-driven molecular motor driving the stepwise translocation of polypeptide chains across the membrane. The chain is Protein translocase subunit SecA from Desulforamulus reducens (strain ATCC BAA-1160 / DSM 100696 / MI-1) (Desulfotomaculum reducens).